The primary structure comprises 562 residues: Gut esterase 1 (562 aa).

A signal peptide spans 1–16; the sequence is MRVLLASLLIFGACWA. C75 and C93 are oxidised to a cystine. The active-site Acyl-ester intermediate is S199. Cysteines 251 and 259 form a disulfide. Residues E320 and H451 each act as charge relay system in the active site. Residues 559-562 carry the Prevents secretion from ER motif; sequence KDEL.

It belongs to the type-B carboxylesterase/lipase family. As to expression, expressed only in the intestine.

The protein resides in the endoplasmic reticulum lumen. It catalyses the reaction a carboxylic ester + H2O = an alcohol + a carboxylate + H(+). The sequence is that of Gut esterase 1 (ges-1) from Caenorhabditis briggsae.